The following is a 321-amino-acid chain: 5,10-methylenetetrahydromethanopterin reductase (321 aa).

The protein belongs to the mer family.

Its subcellular location is the cytoplasm. It carries out the reaction 5-methyl-5,6,7,8-tetrahydromethanopterin + oxidized coenzyme F420-(gamma-L-Glu)(n) + H(+) = 5,10-methylenetetrahydromethanopterin + reduced coenzyme F420-(gamma-L-Glu)(n). Its pathway is one-carbon metabolism; methanogenesis from CO(2); methyl-coenzyme M from 5,10-methylene-5,6,7,8-tetrahydromethanopterin: step 1/2. Its function is as follows. Catalyzes the reversible reduction of methylene-H(4)MPT to methyl-H(4)MPT. This Methanothermobacter thermautotrophicus (strain ATCC 29096 / DSM 1053 / JCM 10044 / NBRC 100330 / Delta H) (Methanobacterium thermoautotrophicum) protein is 5,10-methylenetetrahydromethanopterin reductase.